A 435-amino-acid polypeptide reads, in one-letter code: Matrix extracellular phosphoglycoprotein (435 aa).

Positions 1 to 16 (MQAVSVGLFLFSMTWA) are cleaved as a signal peptide. An N-linked (GlcNAc...) asparagine glycan is attached at N71. Disordered stretches follow at residues 124–145 (LLQNSPGQSKHTPRARRSTHYL) and 166–435 (LLVR…SSGD). Positions 164–186 (PDLLVRGDNDVPPFSGDGQHFMH) are dentonin. Residues 169–171 (RGD) carry the Cell attachment site motif. The O-linked (Xyl...) (chondroitin sulfate) serine glycan is linked to S178. 2 stretches are compositionally biased toward basic and acidic residues: residues 267–278 (KFRELPGKEGNR) and 300–313 (SKEKVKGGSREHTG). Polar residues predominate over residues 337–346 (GNQVTLTESQ). Basic residues-rich tracts occupy residues 382–391 (AHRRTSHPTR) and 405–415 (RRPHPHRRVST). The ASARM motif; interaction with PHEX stretch occupies residues 418–435 (RDSSESSSSGSSSESSGD). The segment covering 422-435 (ESSSSGSSSESSGD) has biased composition (low complexity).

The protein belongs to the PF07175/osteoregulin family. In terms of assembly, interacts (via ASARM motif) with PHEX; the interaction is zinc-dependent. In terms of processing, phosphorylated on serine residues in the ASARM motif; the phosphorylation is important for the inhibition of bone mineralization. Post-translationally, cleaved by CTSB/cathepsin B; the cleavage is blocked by metalloprotease PHEX. Expressed in osteoblasts and osteocytes.

The protein resides in the secreted. Its subcellular location is the extracellular space. It is found in the extracellular matrix. In terms of biological role, regulates renal phosphate excretion. Regulates bone mineralization by osteoblasts and cartilage mineralization by chondrocytes. Regulates the mineralization of the extracellular matrix of the craniofacial complex, such as teeth, bone and cartilage. Increases dental pulp stem cell proliferation. This chain is Matrix extracellular phosphoglycoprotein, found in Rattus norvegicus (Rat).